The sequence spans 86 residues: Large ribosomal subunit protein bL31B (86 aa).

The protein belongs to the bacterial ribosomal protein bL31 family. Type B subfamily. As to quaternary structure, part of the 50S ribosomal subunit.

The sequence is that of Large ribosomal subunit protein bL31B from Streptococcus uberis (strain ATCC BAA-854 / 0140J).